A 184-amino-acid polypeptide reads, in one-letter code: Large ribosomal subunit protein uL6 (184 aa).

The protein belongs to the universal ribosomal protein uL6 family. In terms of assembly, part of the 50S ribosomal subunit.

Its function is as follows. This protein binds to the 23S rRNA, and is important in its secondary structure. It is located near the subunit interface in the base of the L7/L12 stalk, and near the tRNA binding site of the peptidyltransferase center. The sequence is that of Large ribosomal subunit protein uL6 from Thermosipho africanus (strain TCF52B).